Here is a 275-residue protein sequence, read N- to C-terminus: Probable histone chaperone asf-1 (275 aa).

Acidic residues-rich tracts occupy residues 157–166 (EDPVAEPVED), 183–207 (DGQE…EVDL), and 230–247 (KMED…DDEP). The disordered stretch occupies residues 157–275 (EDPVAEPVED…SDKTNNEMVQ (119 aa)). The segment covering 265–275 (LSDKTNNEMVQ) has biased composition (basic and acidic residues).

Belongs to the ASF1 family. As to quaternary structure, interacts with histone H3 and histone H4.

Its subcellular location is the nucleus. Functionally, histone chaperone that facilitates histone deposition and histone exchange and removal during nucleosome assembly and disassembly. The polypeptide is Probable histone chaperone asf-1 (Caenorhabditis elegans).